Reading from the N-terminus, the 221-residue chain is 3-dehydroquinate dehydratase (221 aa).

3-dehydroquinate is bound by residues 33–35 and R63; that span reads EIR. Residue H118 is the Proton donor/acceptor of the active site. K144 (schiff-base intermediate with substrate) is an active-site residue. R181, T200, and Q204 together coordinate 3-dehydroquinate.

This sequence belongs to the type-I 3-dehydroquinase family. In terms of assembly, homodimer.

It catalyses the reaction 3-dehydroquinate = 3-dehydroshikimate + H2O. It participates in metabolic intermediate biosynthesis; chorismate biosynthesis; chorismate from D-erythrose 4-phosphate and phosphoenolpyruvate: step 3/7. In terms of biological role, involved in the third step of the chorismate pathway, which leads to the biosynthesis of aromatic amino acids. Catalyzes the cis-dehydration of 3-dehydroquinate (DHQ) and introduces the first double bond of the aromatic ring to yield 3-dehydroshikimate. In Methanothermobacter thermautotrophicus (strain ATCC 29096 / DSM 1053 / JCM 10044 / NBRC 100330 / Delta H) (Methanobacterium thermoautotrophicum), this protein is 3-dehydroquinate dehydratase.